We begin with the raw amino-acid sequence, 1217 residues long: Rho family-interacting cell polarization regulator 1 (1217 aa).

Phosphoserine is present on S22. Residues 83–112 (RGLTAYLEVHQQEQEKLQRQIKESKRNSRL) are a coiled coil. S345 and S347 each carry phosphoserine. T351 carries the phosphothreonine modification. The tract at residues 371 to 413 (NGTAWSLSSESSDDSSSPQLSGTARYSSTPKPLVQQPEPLPVQ) is disordered. Composition is skewed to low complexity over residues 376–391 (SLSS…PQLS) and 400–413 (PKPL…LPVQ). 2 positions are modified to phosphoserine: S452 and S455. Positions 565 to 762 (TSTTVGSTHK…SPSSIVPEPQ (198 aa)) are disordered. Residues 579-594 (PLTSTGSIPSVTDSIQ) show a composition bias toward polar residues. Positions 595 to 649 (TTTSPTHTTPSPTHTTVSPTHSTPSPTHTTVSPSNAALSPSNATPSLSHSTTSPT) are enriched in low complexity. Residues 650 to 661 (QKATMSTHTTSA) show a composition bias toward polar residues. Positions 664 to 695 (PVQTTTSPISTTVSPSPSVDTAIISSSSAVPS) are enriched in low complexity. Residues 720–729 (ACTSSPSLAS) are compositionally biased toward polar residues. S742 carries the post-translational modification Phosphoserine. A coiled-coil region spans residues 786–828 (RRLEEALRTLMAALDDYRGQFPELQGLEQEVTRLESLLMQRQG). Residues 850–874 (FLNDDEDEDNDSPGDRPTSSPEVVA) form a disordered region. A compositionally biased stretch (acidic residues) spans 852–861 (NDDEDEDNDS). Phosphoserine is present on residues S868 and S869.

This sequence belongs to the RIPOR family. In terms of assembly, interacts (via N-terminus) with RHOA (GTP-bound form); this interaction links active RHOA to STK24 and STK26 kinases. Interacts with RHOB. Interacts with RHOC. Interacts (via C-terminus) with PDCD10; this interaction occurs in a Rho-independent manner. Interacts (via C-terminus) with STK24; this interaction occurs in a PDCD10-dependent and Rho-independent manner. Interacts (via C-terminus) with STK26; this interaction occurs in a PDCD10-dependent and Rho-independent manner. Interacts (via N-terminus) with 14-3-3 proteins; these interactions occur in a Rho-dependent manner.

It localises to the cytoplasm. Its subcellular location is the golgi apparatus. Downstream effector protein for Rho-type small GTPases that plays a role in cell polarity and directional migration. Acts as an adapter protein, linking active Rho proteins to STK24 and STK26 kinases, and hence positively regulates Golgi reorientation in polarized cell migration upon Rho activation. Involved in the subcellular relocation of STK26 from the Golgi to cytoplasm punctae in a Rho- and PDCD10-dependent manner upon serum stimulation. In Rattus norvegicus (Rat), this protein is Rho family-interacting cell polarization regulator 1.